The primary structure comprises 578 residues: Arginine--tRNA ligase (578 aa).

The 'HIGH' region motif lies at 122–132; the sequence is PNLAKEMHVGH.

This sequence belongs to the class-I aminoacyl-tRNA synthetase family. As to quaternary structure, monomer.

Its subcellular location is the cytoplasm. It carries out the reaction tRNA(Arg) + L-arginine + ATP = L-arginyl-tRNA(Arg) + AMP + diphosphate. This is Arginine--tRNA ligase from Pseudoalteromonas atlantica (strain T6c / ATCC BAA-1087).